A 175-amino-acid polypeptide reads, in one-letter code: NADH-quinone oxidoreductase subunit I (175 aa).

2 consecutive 4Fe-4S ferredoxin-type domains span residues 69–98 (KRDEQGRERCTACFCCMWICPANAIHIEAA) and 115–144 (KKFEINLLRCIFCGLCEEACPKGAIYLDGT). 8 residues coordinate [4Fe-4S] cluster: Cys-78, Cys-81, Cys-84, Cys-88, Cys-124, Cys-127, Cys-130, and Cys-134.

This sequence belongs to the complex I 23 kDa subunit family. As to quaternary structure, NDH-1 is composed of 14 different subunits. Subunits NuoA, H, J, K, L, M, N constitute the membrane sector of the complex. [4Fe-4S] cluster serves as cofactor.

The protein localises to the cell inner membrane. It carries out the reaction a quinone + NADH + 5 H(+)(in) = a quinol + NAD(+) + 4 H(+)(out). Functionally, NDH-1 shuttles electrons from NADH, via FMN and iron-sulfur (Fe-S) centers, to quinones in the respiratory chain. The immediate electron acceptor for the enzyme in this species is believed to be ubiquinone. Couples the redox reaction to proton translocation (for every two electrons transferred, four hydrogen ions are translocated across the cytoplasmic membrane), and thus conserves the redox energy in a proton gradient. This is NADH-quinone oxidoreductase subunit I from Leptospira biflexa serovar Patoc (strain Patoc 1 / Ames).